Reading from the N-terminus, the 270-residue chain is FKBP-type peptidyl-prolyl cis-trans isomerase FkpA (270 aa).

Positions 1-25 are cleaved as a signal peptide; sequence MKSLFKVTLLATTMAVALHAPITFA. One can recognise a PPIase FKBP-type domain in the interval 164–249; the sequence is SDTVVVNYKG…VFDVELLDVK (86 aa).

This sequence belongs to the FKBP-type PPIase family.

It localises to the periplasm. It catalyses the reaction [protein]-peptidylproline (omega=180) = [protein]-peptidylproline (omega=0). Functionally, PPIases accelerate the folding of proteins. It catalyzes the cis-trans isomerization of proline imidic peptide bonds in oligopeptides. In Escherichia coli (strain K12), this protein is FKBP-type peptidyl-prolyl cis-trans isomerase FkpA (fkpA).